We begin with the raw amino-acid sequence, 532 residues long: MGAAASRRRALRSEAMSSVAAKVRAARAFGEYLSQSHPENRNGADHLLADAYSGHEGSPEMQPAPHNKRRLSLVSNGRYEGSISDEAVSGKTATEGPQPRVYTISREPALLPGSEAEAIELAVVKGRRQRERHPHHHSQPLRASPGSSREDISRPCQSWAGSRQGSKECPGCAKLVPGPSPRAFGLEQPPLPEASGRHKKLERMYSVDGVSDDVPIRTWFPKENPFSFQTATTTMQAISVFRGYAERKRRKRENDSASVIQRNFRKHLRMVGSRRVKAQTFAERRERSFSRSWSDPTPMKADTSHDSRDSSDLQSSHCTLDEACEDLDWDTEKGLEATACDTEGFLPPKVMLISSKVPKAEYIPTIIRRDDPSIIPILYDHEHATFEDILEEIEKKLNIYHKGAKIWKMLIFCQGGPGHLYLLKNKVATFAKVEKEEDMIHFWKRLSRLMSKVNPEPNVIHIMGCYILGNPNGEKLFQNLRTLMTPYKVTFESPLELSAQGKQMIETYFDFRLYRLWKSRQHSKLLDFDDVL.

Glycine 2 carries the N-myristoyl glycine lipid modification. The tract at residues 2–235 (GAAASRRRAL…FSFQTATTTM (234 aa)) is necessary and sufficient to elicit dendritic processes and synaptic contacts. 2 disordered regions span residues 34-67 (SQSH…APHN) and 127-174 (RRQR…GCAK). Over residues 38–48 (PENRNGADHLL) the composition is skewed to basic and acidic residues. Residues 127–139 (RRQRERHPHHHSQ) are compositionally biased toward basic residues. Residues 155-164 (PCQSWAGSRQ) show a composition bias toward polar residues. Serine 206 bears the Phosphoserine mark. The Nuclear localization signal signature appears at 247 to 252 (RKRRKR). The tract at residues 275–315 (RVKAQTFAERRERSFSRSWSDPTPMKADTSHDSRDSSDLQS) is disordered. 2 positions are modified to phosphoserine: serine 292 and serine 294. Basic and acidic residues predominate over residues 302 to 311 (DTSHDSRDSS).

Belongs to the NSMF family. As to quaternary structure, interacts with KPNA1; the interaction occurs in a calcium-independent manner after synaptic NMDA receptor stimulation and is required for nuclear import of NSMF but is competed by CABP1. Interacts (via the central NLS-containing motif region) with CABP1 (via EF-hands 1 and 2); the interaction occurs in a calcium-dependent manner after synaptic NMDA receptor stimulation and prevents the nuclear import of NSMF. Cannot be competed by calmodulin. Proteolytically processed after NMDA receptor activation. Cleaved in a calcium-dependent and calpain-sensitive manner. Calpain cleavage is essential for the translocation process from dendrites to the nucleus. Expressed in the radiatum and pyramidale strata of the hippocampus (at protein level). Strongly expressed in the brain. Expressed in the sensory and motor cortex, hippocampus, olfactory bulb, thalamus and amygdala. In the olfactory bulb expressed in the granular cell layer, mitral cell layer and the glomerular layer. In the hippocampus highly expressed in the regions associated with neuronal cell types as CA1, CA2, CA3 and granule cells of the dentate gyrus. All isoforms have been detected in the molecular layers of the hippocampus.

It is found in the nucleus. The protein resides in the nucleus envelope. It localises to the nucleus membrane. Its subcellular location is the nucleus matrix. The protein localises to the cytoplasm. It is found in the cell cortex. The protein resides in the cytoskeleton. It localises to the cell membrane. Its subcellular location is the cell projection. The protein localises to the dendrite. It is found in the synapse. The protein resides in the synaptosome. It localises to the postsynaptic density. Its subcellular location is the membrane. In terms of biological role, couples NMDA-sensitive glutamate receptor signaling to the nucleus and triggers long-lasting changes in the cytoarchitecture of dendrites and spine synapse processes. Part of the cAMP response element-binding protein (CREB) shut-off signaling pathway. Stimulates outgrowth of olfactory axons and migration of gonadotropin-releasing hormone (GnRH) and luteinizing-hormone-releasing hormone (LHRH) neuronal cells. In Rattus norvegicus (Rat), this protein is NMDA receptor synaptonuclear signaling and neuronal migration factor (Nsmf).